The sequence spans 92 residues: Mediator-associated protein 3 (92 aa).

A DEK-C domain is found at 13–70; it reads KDLRRKIKKTVKKILESSNLYKITEIKAREEASLKLDLDLSQDPYKVIVKEEVENFLE.

Associated with the Mediator complex.

It is found in the nucleus. This is Mediator-associated protein 3 from Arabidopsis thaliana (Mouse-ear cress).